The sequence spans 142 residues: Hemoglobin subunit alpha (142 aa).

A Globin domain is found at V2 to R142. S4 is modified (phosphoserine). An N6-succinyllysine modification is found at K8. T9 is subject to Phosphothreonine. Residue K12 is modified to N6-succinyllysine. K17 carries the N6-acetyllysine; alternate modification. An N6-succinyllysine; alternate modification is found at K17. At Y25 the chain carries Phosphotyrosine. Phosphoserine is present on S36. K41 carries the post-translational modification N6-succinyllysine. The residue at position 50 (S50) is a Phosphoserine. An O2-binding site is contributed by H59. H88 is a binding site for heme b. Phosphoserine is present on S103. Position 109 is a phosphothreonine (T109). Residues S125 and S132 each carry the phosphoserine modification. 2 positions are modified to phosphothreonine: T135 and T138. At S139 the chain carries Phosphoserine.

It belongs to the globin family. Heterotetramer of two alpha chains and two beta chains in adult hemoglobin A (HbA); two alpha chains and two delta chains in adult hemoglobin A2 (HbA2); two alpha chains and two epsilon chains in early embryonic hemoglobin Gower-2; two alpha chains and two gamma chains in fetal hemoglobin F (HbF). Red blood cells.

Its function is as follows. Involved in oxygen transport from the lung to the various peripheral tissues. Hemopressin acts as an antagonist peptide of the cannabinoid receptor CNR1. Hemopressin-binding efficiently blocks cannabinoid receptor CNR1 and subsequent signaling. The sequence is that of Hemoglobin subunit alpha (HBA1) from Pan paniscus (Pygmy chimpanzee).